The sequence spans 620 residues: Chaperone protein HscA homolog (620 aa).

The protein belongs to the heat shock protein 70 family.

In terms of biological role, chaperone involved in the maturation of iron-sulfur cluster-containing proteins. Has a low intrinsic ATPase activity which is markedly stimulated by HscB. The polypeptide is Chaperone protein HscA homolog (Shewanella sp. (strain MR-7)).